A 190-amino-acid chain; its full sequence is Elongation factor P-like protein (190 aa).

The protein belongs to the elongation factor P family.

In Klebsiella pneumoniae subsp. pneumoniae (strain ATCC 700721 / MGH 78578), this protein is Elongation factor P-like protein.